The sequence spans 778 residues: Preasperterpenoid A synthase PvPS (778 aa).

Positions 1 to 414 are terpene cyclase; the sequence is MAATKKSTAT…HRYNFHKPAA (414 aa). Mg(2+) is bound by residues aspartate 176 and aspartate 180. Aspartate 176 contacts substrate. The DDXXD 1 signature appears at 176–180; that stretch reads DDILD. Substrate-binding positions include 266–269, asparagine 310, 314–318, and 406–407; these read RVIN, SWEKE, and RY. The NSE/DTE signature appears at 310-318; sequence NDYFSWEKE. Residues 414-431 show a composition bias toward basic and acidic residues; that stretch reads AKENEDTDDEGAKSDDSK. Residues 415 to 778 form a prenyltransferase region; it reads KENEDTDDEG…LRLLLKRLQV (364 aa). The segment at 416-454 is disordered; that stretch reads ENEDTDDEGAKSDDSKTTLNDSTDSTVVDVKTPATSGLL. Isopentenyl diphosphate-binding residues include lysine 499, arginine 502, and histidine 531. 2 residues coordinate Mg(2+): aspartate 538 and aspartate 542. Residues 538–542 carry the DDXXD 2 motif; it reads DDIED. Arginine 547 contacts dimethylallyl diphosphate. Position 548 (arginine 548) interacts with isopentenyl diphosphate. Lysine 625, threonine 626, glutamine 662, asparagine 669, lysine 679, and lysine 689 together coordinate dimethylallyl diphosphate.

This sequence in the N-terminal section; belongs to the terpene synthase family. It in the C-terminal section; belongs to the FPP/GGPP synthase family. In terms of assembly, hexamer. It depends on Mg(2+) as a cofactor.

It catalyses the reaction isopentenyl diphosphate + (2E,6E)-farnesyl diphosphate = (2E,6E,10E)-geranylgeranyl diphosphate + diphosphate. The enzyme catalyses isopentenyl diphosphate + (2E,6E,10E)-geranylgeranyl diphosphate = (2E,6E,10E,14E)-geranylfarnesyl diphosphate + diphosphate. It carries out the reaction (2E,6E,10E,14E)-geranylfarnesyl diphosphate = preasperterpenoid A + diphosphate. It participates in secondary metabolite biosynthesis; terpenoid biosynthesis. Bifunctional sesterterpene synthase that possesses both prenyl transferase and terpene cyclase activity, converting isopentenyl diphosphate and dimethylallyl diphosphate into geranylfarnesyl diphosphate (GFPP) and further converting GFPP into preasperterpenoid A. The sequence is that of Preasperterpenoid A synthase PvPS from Talaromyces verruculosus (Penicillium verruculosum).